A 308-amino-acid chain; its full sequence is Folate transporter 1, chloroplastic (308 aa).

Solcar repeat units lie at residues 4 to 94 (SWQW…AKQR), 104 to 192 (LSPA…LRKI), and 213 to 299 (ADYA…VLKL). 6 helical membrane passes run 10 to 30 (ATAGAVAGFATVAAMHSLDVV), 74 to 91 (VIGSTVSWGLYFFFYGRA), 110 to 130 (LASAAEAGALVCLCTNPIWLV), 164 to 184 (ALYKGIVPGLVLVSHGAIQFT), 216 to 236 (AALGGSSKVAAVLLTYPFQVI), and 274 to 293 (GLTANLLKNVPASSITFIVY).

The protein belongs to the mitochondrial carrier (TC 2.A.29) family. In terms of tissue distribution, ubiquitous.

The protein localises to the plastid. Its subcellular location is the chloroplast membrane. Its function is as follows. Mediates folate import into chloroplast. This chain is Folate transporter 1, chloroplastic (FOLT1), found in Arabidopsis thaliana (Mouse-ear cress).